A 246-amino-acid polypeptide reads, in one-letter code: MAGHSKWKNIQRRKNAQDAKRGKLFMKLAKEIYVAAKSGGGDPASNPSLRLVIEKAKAANMPSENIERAIKKATGTQEHTNYEEIRYEGYGPGGVAVMVVCLTDNKNRTAANVRAAFAKNGGNLGETGCVSYLFERKGLLVIDREQHNVDEDELLLLAIEAGAEEMETTDESFEIYTAPESFETVKDELEQQGFTFASAEITMIPQTYTTLEGDDLKKMLKLIDTLEDDDDVQEVYHNLDESVLEE.

The protein belongs to the TACO1 family.

The protein localises to the cytoplasm. This chain is Probable transcriptional regulatory protein GK2594, found in Geobacillus kaustophilus (strain HTA426).